The chain runs to 272 residues: Type III pantothenate kinase (272 aa).

6–13 (DVRNTHTV) lines the ATP pocket. 109–112 (GADR) provides a ligand contact to substrate. The active-site Proton acceptor is D111. D131 contacts K(+). Position 134 (S134) interacts with ATP. A substrate-binding site is contributed by T186.

Belongs to the type III pantothenate kinase family. In terms of assembly, homodimer. Requires NH4(+) as cofactor. K(+) serves as cofactor.

The protein resides in the cytoplasm. The catalysed reaction is (R)-pantothenate + ATP = (R)-4'-phosphopantothenate + ADP + H(+). Its pathway is cofactor biosynthesis; coenzyme A biosynthesis; CoA from (R)-pantothenate: step 1/5. Its function is as follows. Catalyzes the phosphorylation of pantothenate (Pan), the first step in CoA biosynthesis. The polypeptide is Type III pantothenate kinase (Mycobacterium ulcerans (strain Agy99)).